Consider the following 705-residue polypeptide: Polyribonucleotide nucleotidyltransferase (705 aa).

Mg(2+)-binding residues include Asp-486 and Asp-492. The KH domain maps to 553–612 (PRIHTIRINPDKIKDVIGKGGSVIRALTEETGTTIEIEDDGTVKIAATDGEKAKFAIRRI). Residues 622 to 690 (GRIYQGKVTR…RQGRVRLSIK (69 aa)) enclose the S1 motif domain.

Belongs to the polyribonucleotide nucleotidyltransferase family. Component of the RNA degradosome, which is a multiprotein complex involved in RNA processing and mRNA degradation. Requires Mg(2+) as cofactor.

Its subcellular location is the cytoplasm. It catalyses the reaction RNA(n+1) + phosphate = RNA(n) + a ribonucleoside 5'-diphosphate. Functionally, involved in mRNA degradation. Catalyzes the phosphorolysis of single-stranded polyribonucleotides processively in the 3'- to 5'-direction. The protein is Polyribonucleotide nucleotidyltransferase of Serratia proteamaculans (strain 568).